The following is a 410-amino-acid chain: Putative nickel insertion protein (410 aa).

It belongs to the LarC family.

This is Putative nickel insertion protein from Cyanothece sp. (strain PCC 7425 / ATCC 29141).